Reading from the N-terminus, the 172-residue chain is RNA silencing suppressor p19 (172 aa).

Residues 1–15 (MERAIQGNDAREQAY) show a composition bias toward basic and acidic residues. The segment at 1-38 (MERAIQGNDAREQAYGERWNGGPGGSTSPFQLPDESPS) is disordered.

This sequence belongs to the tombusvirus protein p19 family. Homodimer.

Viral suppressor of RNA silencing which binds specifically to silencing RNAs (siRNAs). Acts as a molecular caliper to specifically select siRNAs based on the length of the duplex region of the RNA. This Tomato bushy stunt virus (strain A23) (TBSV) protein is RNA silencing suppressor p19.